Reading from the N-terminus, the 176-residue chain is Putative REP-associated tyrosine transposase (176 aa).

Mg(2+)-binding residues include histidine 59 and histidine 61. Tyrosine 148 serves as the catalytic Nucleophile.

The protein belongs to the transposase 17 family. RAYT subfamily. Homodimer. It depends on Mg(2+) as a cofactor.

Functionally, transposase responsible for transposition an insertion sequence (IS) element. Transposition occurs in 2 main steps, excision from the donor DNA 'top strand' into a single strand circle and its subsequent reinsertion into the DNA target. This increases the copy number of the IS. The polypeptide is Putative REP-associated tyrosine transposase (Haemophilus influenzae (strain ATCC 51907 / DSM 11121 / KW20 / Rd)).